The primary structure comprises 590 residues: L-fucose isomerase (590 aa).

Catalysis depends on proton acceptor residues glutamate 337 and aspartate 361. Mn(2+) contacts are provided by glutamate 337, aspartate 361, and histidine 528.

Belongs to the L-fucose isomerase family. Mn(2+) serves as cofactor.

It is found in the cytoplasm. It carries out the reaction L-fucose = L-fuculose. Its pathway is carbohydrate degradation; L-fucose degradation; L-lactaldehyde and glycerone phosphate from L-fucose: step 1/3. Converts the aldose L-fucose into the corresponding ketose L-fuculose. The polypeptide is L-fucose isomerase (Bacteroides fragilis (strain ATCC 25285 / DSM 2151 / CCUG 4856 / JCM 11019 / LMG 10263 / NCTC 9343 / Onslow / VPI 2553 / EN-2)).